The chain runs to 291 residues: ATP synthase gamma chain (291 aa).

It belongs to the ATPase gamma chain family. As to quaternary structure, F-type ATPases have 2 components, CF(1) - the catalytic core - and CF(0) - the membrane proton channel. CF(1) has five subunits: alpha(3), beta(3), gamma(1), delta(1), epsilon(1). CF(0) has three main subunits: a, b and c.

It localises to the cell inner membrane. In terms of biological role, produces ATP from ADP in the presence of a proton gradient across the membrane. The gamma chain is believed to be important in regulating ATPase activity and the flow of protons through the CF(0) complex. The sequence is that of ATP synthase gamma chain from Nitratidesulfovibrio vulgaris (strain ATCC 29579 / DSM 644 / CCUG 34227 / NCIMB 8303 / VKM B-1760 / Hildenborough) (Desulfovibrio vulgaris).